The primary structure comprises 359 residues: Medium-wave-sensitive opsin 1 (359 aa).

Residues 1–47 (MAQQLTGEQTLDHYEDSTQASIFTYTNSNSTRGPFEGPNYHIAPRWV) are Extracellular-facing. Positions 12-38 (DHYEDSTQASIFTYTNSNSTRGPFEGP) are required for 11-cis-retinal regeneration. Asn-29 is a glycosylation site (N-linked (GlcNAc...) asparagine). A helical transmembrane segment spans residues 48-72 (YHLTSTWMILVVIASVFTNGLVLAA). Residues 73-84 (TMRFKKLRHPLN) are Cytoplasmic-facing. A helical membrane pass occupies residues 85 to 110 (WILVNLAVADLAETIIASTISVVNQI). The Extracellular portion of the chain corresponds to 111–124 (YGYFVLGHPLCVIE). Cysteines 121 and 198 form a disulfide. The helical transmembrane segment at 125–144 (GYIVSLCGITGLWSLAIISW) threads the bilayer. The Cytoplasmic segment spans residues 145-163 (ERWLVVCKPFGNVRFDAKL). Residues 164–187 (ATVGIVFSWVWAAVWTAPPIFGWS) traverse the membrane as a helical segment. Residues 188 to 213 (RYWPYGLKTSCGPDVFSGTSYPGVQS) lie on the Extracellular side of the membrane. The chain crosses the membrane as a helical span at residues 214–241 (YMMVLMVTCCIFPLSIIVLCYLQVWLAI). Residues 242–263 (RAVAKQQKESESTQKAEKEVTR) lie on the Cytoplasmic side of the membrane. Residues 264–287 (MVVVMVFAYCLCWGPYTFFACFAT) traverse the membrane as a helical segment. Residues 288-295 (AHPGYAFH) are Extracellular-facing. A helical membrane pass occupies residues 296–320 (PLVASLPSYFAKSATIYNPIIYVFM). Lys-307 is modified (N6-(retinylidene)lysine). Over 321-359 (NRQFRNCILQLFGKKVDDSSELSSTSKTEVSSVSSVSPA) the chain is Cytoplasmic.

The protein belongs to the G-protein coupled receptor 1 family. Opsin subfamily. In terms of assembly, monomer. Homodimer. Homotetramer. Post-translationally, O-glycosylated. In terms of processing, phosphorylated on some or all of the serine and threonine residues present in the C-terminal region. As to expression, expressed in cone photoreceptor cells.

Its subcellular location is the membrane. Visual pigments are the light-absorbing molecules that mediate vision. They consist of an apoprotein, opsin, covalently linked to cis-retinal. May increase spectral sensitivity in dim light. This is Medium-wave-sensitive opsin 1 (Opn1mw) from Rattus norvegicus (Rat).